We begin with the raw amino-acid sequence, 139 residues long: Ribonuclease P protein component (139 aa).

The segment at 116–139 (FSKNKSTIGGEYSPKNEQCESELP) is disordered.

The protein belongs to the RnpA family. In terms of assembly, consists of a catalytic RNA component (M1 or rnpB) and a protein subunit.

It carries out the reaction Endonucleolytic cleavage of RNA, removing 5'-extranucleotides from tRNA precursor.. Functionally, RNaseP catalyzes the removal of the 5'-leader sequence from pre-tRNA to produce the mature 5'-terminus. It can also cleave other RNA substrates such as 4.5S RNA. The protein component plays an auxiliary but essential role in vivo by binding to the 5'-leader sequence and broadening the substrate specificity of the ribozyme. The polypeptide is Ribonuclease P protein component (Chlamydia abortus (strain DSM 27085 / S26/3) (Chlamydophila abortus)).